Consider the following 160-residue polypeptide: Small ribosomal subunit protein uS7 (160 aa).

This sequence belongs to the universal ribosomal protein uS7 family. In terms of assembly, part of the 30S ribosomal subunit. Contacts proteins S9 and S11.

Functionally, one of the primary rRNA binding proteins, it binds directly to 16S rRNA where it nucleates assembly of the head domain of the 30S subunit. Is located at the subunit interface close to the decoding center, probably blocks exit of the E-site tRNA. The chain is Small ribosomal subunit protein uS7 from Hydrogenobaculum sp. (strain Y04AAS1).